We begin with the raw amino-acid sequence, 421 residues long: Meiotic fizzy-related protein 1 (421 aa).

The tract at residues 79-107 (DTPDRKSYSLSPISPQSQDMLRQPQKPKR) is disordered. Polar residues predominate over residues 86–98 (YSLSPISPQSQDM). WD repeat units lie at residues 123 to 160 (KNDF…VVQL), 164 to 203 (GATN…SVRS), 206 to 246 (GHSE…EMMK), 247 to 286 (VHEQ…PLHK), 289 to 331 (EHTA…LQNK), 333 to 374 (DTGS…NIAN), and 377 to 416 (AHTN…PKEE).

It belongs to the WD repeat CDC20/Fizzy family. Interacts with mes1.

It is found in the nucleus. Functionally, meiosis-specific activator of the anaphase promoting complex/cyclosome (APC/C). Involved in cdc13 degradation. The protein is Meiotic fizzy-related protein 1 (mfr1) of Schizosaccharomyces pombe (strain 972 / ATCC 24843) (Fission yeast).